Consider the following 190-residue polypeptide: dTTP/UTP pyrophosphatase (190 aa).

Catalysis depends on Asp70, which acts as the Proton acceptor.

It belongs to the Maf family. YhdE subfamily. A divalent metal cation is required as a cofactor.

Its subcellular location is the cytoplasm. The catalysed reaction is dTTP + H2O = dTMP + diphosphate + H(+). The enzyme catalyses UTP + H2O = UMP + diphosphate + H(+). Functionally, nucleoside triphosphate pyrophosphatase that hydrolyzes dTTP and UTP. May have a dual role in cell division arrest and in preventing the incorporation of modified nucleotides into cellular nucleic acids. The polypeptide is dTTP/UTP pyrophosphatase (Gloeobacter violaceus (strain ATCC 29082 / PCC 7421)).